Here is a 30-residue protein sequence, read N- to C-terminus: uncharacterized protein (30 aa).

Residues 9–26 (YRLVIIVLISVYYRYRFF) traverse the membrane as a helical segment.

It localises to the plastid. The protein resides in the chloroplast membrane. This is an uncharacterized protein from Marchantia polymorpha (Common liverwort).